A 1487-amino-acid chain; its full sequence is MALEIDAKNAAAAATGDGGAPGKAKAKENKSNSNSNNNNVPAAGEKNLVNGSSAATKKKGKKNRNKSPPQQDVSAAGAALSNGHAEKASVNGDAADANANVLDKKVEEEGATAAAGATEAAAEVGSSGDGGAATEGEAAASGEDVDLDALHDVGITVNISSPGADVLSVQLSSMELVQEIHQLLMDREETCHRTCFSLQLDNVTLDNFAELKTIEGLEQGSTIRVVEEPYTMREARIHVRHVRDLLKNLDPADAYNGIDCTSLTYLITITQGDLLDKKRTRPDSVDCTPPDYVIPGVREPPLLPLHPNIKNAKGPQALKVLTTSAWNPPPGPRKLHGDLMYLYVVTMEDKRFHISACSKGFYINQSTDECFNPKPDNPSHLSHSLIDLLSHISPSFRRAFQTIQKRRTMRHAFERVATPYQVYQWSAPQLEHTVDAIRAEDAFSSKLGYEEHIPGQTRDWNEELQTTRELPRKTLPERLLRERAIFKVHGDFVTAATRGAMAVIDGNVLAINPGEDPKMQMFIWNNIFFSLGFDVRDHYKELGGDHAAFVAPRYDLHGVRVYNAVDIEGLYTLGTVVIDYRGYRVTAQSIIPGILEREQEQSVVYGSIDFGKTVLSHPKYLELLRLAGKHLKILPHSVLNERDEPVELCSSVECKGIIGNDGRHYILDLLRTFPPDVNFLKLQDVQLSKELTDMGFPIEHRHKLCCLRQELLEAFIEDRYVTFIRIAAVHLQQLNAKKQAEKELPSITEKQEEPEKEQAEKSSAEQPEKEKEKEKDKEDEQKESKPSPTETKSAEAMVNAIREAQSNVAVSNEVQAAEVVKRACAAVGSLKEKEFDFRFNPDVFSPGIRHVDSPESGAQSLAKQKRLVQDAAEFLVLKQIPAFIKEHMAHSSPPIDGQSLTESLHSHGINVRYLGKVIKMLSQMPRMDYLHRIAILELIVRATKHIYYTYMQSTEPLHLSAAISHFLNCLLTTGPVNPAVSSEEVHKKQSRNNGGKHNKHNKSNKSGKPQSTSAAAATQNGHSSTAANGSANSAANTASTSGNSNYDWTLVTPRSLWQQIRKEIKSYWNWELDCDSIESACAKYGLLRISLLRAFCLKVGIQVLLREYNFESKHKPTFGDDDIVNVFPVVKHISPRATDAYNFYTTGQAKIQQGLLKEGYELISEALNLLNNVFGAMHQENGSCLRMLARLSYLLGDAQDALAIQQRAVIMSERVNGIDHPSTILEYTHLSLYSFANGHVGMSLKLLYRARYLLVLVCGEDHPEVALIDSNISLILHALGEYELSLRFIEHALKLNLKYFGNKAMHVAVSYHLMARIQSCMGDFRSALNNEKETYSIYKSQLGEKHDKTRESAECLRLLTHEAVALQRKMNDIYSNGKLTSDLPPIHITPPSMGSVLEMLNTINGILFVHISQKDIVKVRSQIEKHLKTSDESGPNDDNEVTAALKTFVAAINYNDTEQPKEGSEVEGATATQLTNGSEDSTTTVSS.

2 disordered regions span residues 1–94 (MALE…NGDA) and 110–140 (GATA…EAAA). The segment covering 56–65 (TKKKGKKNRN) has biased composition (basic residues). Residues 111-126 (ATAAAGATEAAAEVGS) show a composition bias toward low complexity. Residue serine 284 is modified to Phosphoserine. The region spanning 438-680 (RAEDAFSSKL…RTFPPDVNFL (243 aa)) is the Clu domain. A compositionally biased stretch (basic and acidic residues) spans 739–785 (QAEKELPSITEKQEEPEKEQAEKSSAEQPEKEKEKEKDKEDEQKESK). Disordered stretches follow at residues 739 to 794 (QAEK…TKSA) and 980 to 1040 (VSSE…TAST). Positions 988–1005 (KQSRNNGGKHNKHNKSNK) are enriched in basic residues. Over residues 1009 to 1019 (PQSTSAAAATQ) the composition is skewed to polar residues. The span at 1020–1040 (NGHSSTAANGSANSAANTAST) shows a compositional bias: low complexity. TPR repeat units follow at residues 1140–1173 (AYNF…LNNV), 1266–1299 (ALID…NLKY), and 1301–1334 (GNKA…EKET). The interval 1456–1487 (DTEQPKEGSEVEGATATQLTNGSEDSTTTVSS) is disordered. The span at 1470-1487 (TATQLTNGSEDSTTTVSS) shows a compositional bias: polar residues.

Belongs to the CLU family.

It is found in the cytoplasm. MRNA-binding protein involved in proper cytoplasmic distribution of mitochondria. The chain is Protein clueless from Drosophila mojavensis (Fruit fly).